Here is a 114-residue protein sequence, read N- to C-terminus: Large ribosomal subunit protein uL22c (114 aa).

This sequence belongs to the universal ribosomal protein uL22 family. In terms of assembly, part of the 50S ribosomal subunit.

Its subcellular location is the plastid. It is found in the chloroplast. Its function is as follows. This protein binds specifically to 23S rRNA. Functionally, the globular domain of the protein is located near the polypeptide exit tunnel on the outside of the subunit, while an extended beta-hairpin is found that lines the wall of the exit tunnel in the center of the 70S ribosome. This Gracilaria tenuistipitata (Red alga) protein is Large ribosomal subunit protein uL22c (rpl22).